The following is a 229-amino-acid chain: Heptaprenylglyceryl phosphate synthase (229 aa).

K12 contributes to the sn-glycerol 1-phosphate binding site. Residues D14 and T40 each coordinate Mg(2+). Residues 159-164, G189, and 209-210 each bind sn-glycerol 1-phosphate; these read YIEYSG and GN.

The protein belongs to the GGGP/HepGP synthase family. Group I subfamily. In terms of assembly, homodimer. Mg(2+) is required as a cofactor.

It catalyses the reaction sn-glycerol 1-phosphate + all-trans-heptaprenyl diphosphate = 3-heptaprenyl-sn-glycero-1-phosphate + diphosphate. The protein operates within membrane lipid metabolism; glycerophospholipid metabolism. Functionally, prenyltransferase that catalyzes in vivo the transfer of the heptaprenyl moiety of heptaprenyl pyrophosphate (HepPP; 35 carbon atoms) to the C3 hydroxyl of sn-glycerol-1-phosphate (G1P), producing heptaprenylglyceryl phosphate (HepGP). This reaction is an ether-bond-formation step in the biosynthesis of archaea-type G1P-based membrane lipids found in Bacillales. This chain is Heptaprenylglyceryl phosphate synthase, found in Oceanobacillus iheyensis (strain DSM 14371 / CIP 107618 / JCM 11309 / KCTC 3954 / HTE831).